The chain runs to 85 residues: MNYLVVICFALLLMTGVESGRDAYIADNLNCAYTCGSNSYCNTECTKNGAVSGYCQWLGKYGNACWCINLPDKVPIRIPGACRGR.

A signal peptide spans 1–19; that stretch reads MNYLVVICFALLLMTGVES. The LCN-type CS-alpha/beta domain occupies 21-83; that stretch reads RDAYIADNLN…VPIRIPGACR (63 aa). 4 disulfides stabilise this stretch: cysteine 31/cysteine 82, cysteine 35/cysteine 55, cysteine 41/cysteine 65, and cysteine 45/cysteine 67. Arginine 83 bears the Arginine amide mark.

It belongs to the long (4 C-C) scorpion toxin superfamily. Sodium channel inhibitor family. Alpha subfamily. In terms of tissue distribution, expressed by the venom gland.

It is found in the secreted. In terms of biological role, alpha toxins bind voltage-independently at site-3 of sodium channels (Nav) and inhibit the inactivation of the activated channels, thereby blocking neuronal transmission. This toxin is active against insects (para/tipE). This chain is Alpha-insect toxin BjaIT, found in Hottentotta judaicus (Black scorpion).